Reading from the N-terminus, the 418-residue chain is Dihydrolipoyllysine-residue acetyltransferase component of pyruvate dehydrogenase complex (418 aa).

The region spanning 2 to 78 is the Lipoyl-binding domain; the sequence is PIKLLMPALS…PVNSLIAVLI (77 aa). An N6-lipoyllysine modification is found at Lys-43. The Peripheral subunit-binding (PSBD) domain maps to 133–170; sequence FASPLAKRLAKIQNVRIEEIKGSGPHGRIIKQDVLSHK. His-388 is a catalytic residue.

It belongs to the 2-oxoacid dehydrogenase family. Forms a 24-polypeptide structural core with octahedral symmetry. (R)-lipoate serves as cofactor.

The enzyme catalyses N(6)-[(R)-dihydrolipoyl]-L-lysyl-[protein] + acetyl-CoA = N(6)-[(R)-S(8)-acetyldihydrolipoyl]-L-lysyl-[protein] + CoA. Functionally, the pyruvate dehydrogenase complex catalyzes the overall conversion of pyruvate to acetyl-CoA and CO(2). It contains multiple copies of three enzymatic components: pyruvate dehydrogenase (E1), dihydrolipoamide acetyltransferase (E2) and lipoamide dehydrogenase (E3). This Rickettsia bellii (strain RML369-C) protein is Dihydrolipoyllysine-residue acetyltransferase component of pyruvate dehydrogenase complex (pdhC).